Here is a 379-residue protein sequence, read N- to C-terminus: Cobalt-precorrin-5B C(1)-methyltransferase (379 aa).

This sequence belongs to the CbiD family.

It carries out the reaction Co-precorrin-5B + S-adenosyl-L-methionine = Co-precorrin-6A + S-adenosyl-L-homocysteine. Its pathway is cofactor biosynthesis; adenosylcobalamin biosynthesis; cob(II)yrinate a,c-diamide from sirohydrochlorin (anaerobic route): step 6/10. Functionally, catalyzes the methylation of C-1 in cobalt-precorrin-5B to form cobalt-precorrin-6A. The sequence is that of Cobalt-precorrin-5B C(1)-methyltransferase from Salmonella typhi.